Reading from the N-terminus, the 571-residue chain is Potassium-transporting ATPase potassium-binding subunit (571 aa).

Helical transmembrane passes span 3 to 23 (LIGW…VKPL), 64 to 84 (LGYG…LYAI), 135 to 155 (LGLT…AVAL), 179 to 199 (LYVL…QGMP), 254 to 274 (LANL…TNVF), 284 to 304 (GWAI…VTYA), 330 to 350 (FGIV…CGAV), 357 to 376 (FTAL…EIIV), 421 to 441 (MLAI…ATVL), 488 to 508 (LALG…AIAG), and 527 to 547 (GGLF…LTFF).

It belongs to the KdpA family. In terms of assembly, the system is composed of three essential subunits: KdpA, KdpB and KdpC.

The protein localises to the cell inner membrane. Part of the high-affinity ATP-driven potassium transport (or Kdp) system, which catalyzes the hydrolysis of ATP coupled with the electrogenic transport of potassium into the cytoplasm. This subunit binds the periplasmic potassium ions and delivers the ions to the membrane domain of KdpB through an intramembrane tunnel. The polypeptide is Potassium-transporting ATPase potassium-binding subunit (Methylorubrum populi (strain ATCC BAA-705 / NCIMB 13946 / BJ001) (Methylobacterium populi)).